Consider the following 578-residue polypeptide: Asparagine synthetase [glutamine-hydrolyzing] 3 (578 aa).

The For GATase activity role is filled by Cys2. The Glutamine amidotransferase type-2 domain maps to 2–185 (CGILAVLGCV…PGHIYSSKQG (184 aa)). L-glutamine is bound by residues 50–54 (RLAIV), 75–77 (NGE), and Asp98. An Asparagine synthetase domain is found at 210 to 450 (VRNTFEKAVI…LPKHILYRQK (241 aa)). Residues Leu231, Ile267, and 341–342 (SG) each bind ATP. Positions 555-572 (GEDKTEDSRPEKLQKLAE) are enriched in basic and acidic residues. Residues 555–578 (GEDKTEDSRPEKLQKLAEKTPAIV) form a disordered region.

It catalyses the reaction L-aspartate + L-glutamine + ATP + H2O = L-asparagine + L-glutamate + AMP + diphosphate + H(+). It functions in the pathway amino-acid biosynthesis; L-asparagine biosynthesis. Essential for nitrogen assimilation, distribution and remobilization within the plant via the phloem. This Arabidopsis thaliana (Mouse-ear cress) protein is Asparagine synthetase [glutamine-hydrolyzing] 3 (ASN3).